The following is a 479-amino-acid chain: Sulfate adenylyltransferase subunit 1 (479 aa).

The tr-type G domain occupies 25–239 (KSLLRFLTCG…EVLETVDIQR (215 aa)). Residues 34-41 (GSVDDGKS) are G1. A GTP-binding site is contributed by 34 to 41 (GSVDDGKS). Residues 92-96 (GITID) form a G2 region. Residues 113 to 116 (DTPG) are G3. GTP is bound by residues 113–117 (DTPGH) and 168–171 (NKMD). Residues 168–171 (NKMD) are G4. A G5 region spans residues 206-208 (SAL).

The protein belongs to the TRAFAC class translation factor GTPase superfamily. Classic translation factor GTPase family. CysN/NodQ subfamily. As to quaternary structure, heterodimer composed of CysD, the smaller subunit, and CysN.

It carries out the reaction sulfate + ATP + H(+) = adenosine 5'-phosphosulfate + diphosphate. It functions in the pathway sulfur metabolism; hydrogen sulfide biosynthesis; sulfite from sulfate: step 1/3. In terms of biological role, with CysD forms the ATP sulfurylase (ATPS) that catalyzes the adenylation of sulfate producing adenosine 5'-phosphosulfate (APS) and diphosphate, the first enzymatic step in sulfur assimilation pathway. APS synthesis involves the formation of a high-energy phosphoric-sulfuric acid anhydride bond driven by GTP hydrolysis by CysN coupled to ATP hydrolysis by CysD. The sequence is that of Sulfate adenylyltransferase subunit 1 from Salmonella paratyphi B (strain ATCC BAA-1250 / SPB7).